A 301-amino-acid chain; its full sequence is 2-(hydroxymethyl)glutarate dehydrogenase (301 aa).

Residues G8–N22 and S99 contribute to the NAD(+) site. The active site involves K174. NAD(+) is bound at residue K243.

Belongs to the HIBADH-related family. In terms of assembly, homotetramer.

It catalyses the reaction (S)-2-hydroxymethylglutarate + NAD(+) = 2-formylglutarate + NADH + H(+). The protein operates within cofactor degradation; nicotinate degradation; propanoate and pyruvate from 6-hydroxynicotinate: step 3/8. In terms of biological role, catalyzes the conversion of 2-formylglutarate to (S)-2-hydroxymethylglutarate. Has very low activity with (S)-3-hydroxyisobutyrate. This chain is 2-(hydroxymethyl)glutarate dehydrogenase, found in Eubacterium barkeri (Clostridium barkeri).